The chain runs to 239 residues: Fatty acid metabolism regulator protein (239 aa).

The HTH gntR-type domain maps to 6–74; that stretch reads KGPASFAEKY…HGKPTRVNNF (69 aa). The H-T-H motif DNA-binding region spans 34-53; the sequence is ERELSELIGVTRTTLREVLQ.

As to quaternary structure, homodimer.

The protein resides in the cytoplasm. In terms of biological role, multifunctional regulator of fatty acid metabolism. This Shewanella halifaxensis (strain HAW-EB4) protein is Fatty acid metabolism regulator protein.